The sequence spans 319 residues: MVLSSDLLRDDKQLDLFFASLDVKKRYLLALSGGSDSLFLFYLLKERGVSFTAVHIDHGWRSTSAQEAKELEELCAREGVPFVLYTLTAEEQGDKDLENQARKKRYAFLYESYRQLDAGGIFLAHHANDQAETVLKRLLESAHLTNLKAMAERSYVEDVLLLRPLLHIPKSSLKEALDARGISYLQDPSNEDERYLRARMRKKLFPWLEEVFGKNITFPLLTLGEESAELSEYLEKQAQPFFSAATHQDSQGELPCPDCLIQQAFLCKWVMKKFFNNAGIAVSRHFLQMVYDHLSRSSCATLRMRNKIVIIKPGVVVID.

32–37 (SGGSDS) contributes to the ATP binding site.

This sequence belongs to the tRNA(Ile)-lysidine synthase family.

The protein resides in the cytoplasm. The catalysed reaction is cytidine(34) in tRNA(Ile2) + L-lysine + ATP = lysidine(34) in tRNA(Ile2) + AMP + diphosphate + H(+). In terms of biological role, ligates lysine onto the cytidine present at position 34 of the AUA codon-specific tRNA(Ile) that contains the anticodon CAU, in an ATP-dependent manner. Cytidine is converted to lysidine, thus changing the amino acid specificity of the tRNA from methionine to isoleucine. This chain is tRNA(Ile)-lysidine synthase, found in Chlamydia pneumoniae (Chlamydophila pneumoniae).